We begin with the raw amino-acid sequence, 141 residues long: Nucleoside diphosphate kinase (141 aa).

The ATP site is built by K9, F57, R85, T91, R102, and N112. H115 serves as the catalytic Pros-phosphohistidine intermediate.

The protein belongs to the NDK family. In terms of assembly, homotetramer. Requires Mg(2+) as cofactor.

The protein localises to the cytoplasm. It catalyses the reaction a 2'-deoxyribonucleoside 5'-diphosphate + ATP = a 2'-deoxyribonucleoside 5'-triphosphate + ADP. The catalysed reaction is a ribonucleoside 5'-diphosphate + ATP = a ribonucleoside 5'-triphosphate + ADP. Functionally, major role in the synthesis of nucleoside triphosphates other than ATP. The ATP gamma phosphate is transferred to the NDP beta phosphate via a ping-pong mechanism, using a phosphorylated active-site intermediate. This Chlamydia felis (strain Fe/C-56) (Chlamydophila felis) protein is Nucleoside diphosphate kinase.